The chain runs to 572 residues: SHUGOSHIN 1 (572 aa).

The stretch at 59 to 110 forms a coiled coil; that stretch reads KHQQQAILISSKENAENLQKENTKLMKVVMERDGIKSDLKKLRIEFQKVQEQ. Disordered stretches follow at residues 185–221, 244–285, 333–352, and 484–572; these read DADHEHASGSSNANSLQRNEKANSKRRVSGRKNPANS, KLVS…QTET, ARLKSQEPEPSESFHDSIET, and SRRQ…RGGF. A compositionally biased stretch (polar residues) spans 192 to 201; it reads SGSSNANSLQ. 4 stretches are compositionally biased toward basic and acidic residues: residues 244-257, 336-352, 523-542, and 552-572; these read KLVSDSDNDAENHI, KSQEPEPSESFHDSIET, ELKRESKKKPTGDESEEMRK, and AAEKIKSYKEPSLKEKMRGGF.

The protein belongs to the shugoshin family.

In terms of biological role, protects sister chromatid centromere cohesion in meiosis I but not through the protection of the cohesin SYN1. Required with SGO2 for full protection of centromeric cohesion during anaphase I. Required to prevent precocious release of pericentromeric cohesins during meiosis. Not necessary for the maintenance of the synaptonemal complex (SC). Not required for monopolar spindle orientation in meiosis I. This Arabidopsis thaliana (Mouse-ear cress) protein is SHUGOSHIN 1.